The following is a 484-amino-acid chain: ETS translocation variant 4 (484 aa).

Lys-6 is covalently cross-linked (Glycyl lysine isopeptide (Lys-Gly) (interchain with G-Cter in SUMO2)). The interval 90–115 is disordered; it reads SPTTRIKKEPQSPRTDPALSCSRKPP. A Glycyl lysine isopeptide (Lys-Gly) (interchain with G-Cter in SUMO) cross-link involves residue Lys-96. Phosphoserine is present on Ser-101. Lys-139 participates in a covalent cross-link: Glycyl lysine isopeptide (Lys-Gly) (interchain with G-Cter in SUMO2). Ser-140, Ser-149, and Ser-214 each carry phosphoserine. Glycyl lysine isopeptide (Lys-Gly) (interchain with G-Cter in SUMO) cross-links involve residues Lys-226 and Lys-260. Lys-322 participates in a covalent cross-link: Glycyl lysine isopeptide (Lys-Gly) (interchain with G-Cter in SUMO2). Residues 341–421 constitute a DNA-binding region (ETS); it reads LQLWQFLVAL…AGERYVYKFV (81 aa).

Belongs to the ETS family. Sumoylated; enhanced upon ERK/MAP kinase pathway activation, it positively regulates the transcriptional activator capacity. Sumoylation at Lys-96 probably requires phosphorylation at Ser-101. Transiently polysumoylated and desumoylated by SENP1. Sumoylation is a prerequisite to polyubiquitination which in turn increases proteasomal-mediated degradation. Probably polyubiquitinated by RNF4 and deubiquitinated by USP2. As to expression, expressed in keratinocytes.

The protein localises to the nucleus. Transcriptional activator. May play a role in keratinocyte differentiation. In terms of biological role, (Microbial infection) Binds to the enhancer of the adenovirus E1A gene and acts as a transcriptional activator; the core-binding sequence is 5'-[AC]GGA[AT]GT-3'. This chain is ETS translocation variant 4 (ETV4), found in Homo sapiens (Human).